The sequence spans 181 residues: CASP-like protein UU-1 (181 aa).

Residues M1–R30 are Cytoplasmic-facing. Residues T31–A51 form a helical membrane-spanning segment. Over T52–K65 the chain is Extracellular. Residues M66–L86 traverse the membrane as a helical segment. Residues T87–T107 are Cytoplasmic-facing. Residues V108–G128 form a helical membrane-spanning segment. The Extracellular portion of the chain corresponds to N129–R147. The chain crosses the membrane as a helical span at residues G148 to L168. Residues S169 to R181 are Cytoplasmic-facing.

This sequence belongs to the Casparian strip membrane proteins (CASP) family. Homodimer and heterodimers.

The protein resides in the cell membrane. The chain is CASP-like protein UU-1 from Sorghum bicolor (Sorghum).